A 275-amino-acid polypeptide reads, in one-letter code: Large ribosomal subunit protein uL2 (275 aa).

Disordered stretches follow at residues 1–24 (MGIR…FSEI) and 208–275 (AGRT…RRRR). The span at 12–22 (GTRQATVSDFS) shows a compositional bias: polar residues. 2 stretches are compositionally biased toward basic residues: residues 208–219 (AGRTRHLGRRPQ) and 255–275 (LGKK…RRRR).

This sequence belongs to the universal ribosomal protein uL2 family. As to quaternary structure, part of the 50S ribosomal subunit. Forms a bridge to the 30S subunit in the 70S ribosome.

One of the primary rRNA binding proteins. Required for association of the 30S and 50S subunits to form the 70S ribosome, for tRNA binding and peptide bond formation. It has been suggested to have peptidyltransferase activity; this is somewhat controversial. Makes several contacts with the 16S rRNA in the 70S ribosome. This is Large ribosomal subunit protein uL2 from Picosynechococcus sp. (strain ATCC 27264 / PCC 7002 / PR-6) (Agmenellum quadruplicatum).